The following is a 148-amino-acid chain: Augurin (148 aa).

Residues 1–31 form the signal peptide; the sequence is MGTSSARPAVLALAGLALLLLLCLGPGDVSG. 2 consecutive propeptides follow at residues 32–68 and 133–148; these read NKLK…LKRA and SREG…YDDY.

This sequence belongs to the augurin family. In terms of tissue distribution, expressed in the brain, with expression in the choroid plexus and the ventricular ependymal cells (at protein level).

The protein resides in the secreted. It is found in the cytoplasm. It localises to the apical cell membrane. In terms of biological role, probable hormone that may attenuate cell proliferation and induce senescence of oligodendrocyte and neural precursor cells in the central nervous system. ECRG4-induced senescence is characterized by G1 arrest, RB1 dephosphorylation and accelerated CCND1 and CCND3 proteasomal degradation. This is Augurin from Rattus norvegicus (Rat).